The sequence spans 344 residues: Ferrochelatase (344 aa).

Histidine 196 and glutamate 277 together coordinate Fe cation.

This sequence belongs to the ferrochelatase family.

It is found in the cytoplasm. The enzyme catalyses heme b + 2 H(+) = protoporphyrin IX + Fe(2+). The protein operates within porphyrin-containing compound metabolism; protoheme biosynthesis; protoheme from protoporphyrin-IX: step 1/1. In terms of biological role, catalyzes the ferrous insertion into protoporphyrin IX. This is Ferrochelatase from Synechococcus sp. (strain JA-2-3B'a(2-13)) (Cyanobacteria bacterium Yellowstone B-Prime).